The primary structure comprises 490 residues: MPATQLLLLACLVWGLGARTAQLRKANDRSGRCQYTFSVASPNESSCPEQGQAMSAIQDLQRDSSAQRADLESTKARLRSLESLVHQLTLDEAAGPSATQEGLQRELGALRREREQLESQNRELEASYSNLLRDKSALEEEKRRLREENEDLARRLDSSSQEVARLRRGQCPQARGTPQDVPSGSREVSKWNVETVNFQELKSELTEVPASRILKESPSGHPRSEEGDPGCGELVWVGEPLTLRRAETITGKYGVWMRDPKPAYPYTQETTWRIDTVGTDIRQVFEYDLSSQFLQGYPSKVHVLPRPLESTGAVVYWGSLYFQGAESRTVIRYELNTETVKAEKEIPGAGYHGQFPYSWGGYTDIDLAVDETGLWVIYSTQEAKGAIVLSKLNPESLELERTWETNIRKQSVANAFIICGRLYTVSSYSAPDATINFAYDTGTGRSRALTVPFKNRYKYSSMVDYNPLEKKLFAWDNFNMVTYDLRLSEM.

A signal peptide spans 1 to 18 (MPATQLLLLACLVWGLGA). Asn-43 is a glycosylation site (N-linked (GlcNAc...) asparagine). The stretch at 52 to 169 (QAMSAIQDLQ…SQEVARLRRG (118 aa)) forms a coiled coil. Over residues 146–157 (REENEDLARRLD) the composition is skewed to basic and acidic residues. The disordered stretch occupies residues 146–188 (REENEDLARRLDSSSQEVARLRRGQCPQARGTPQDVPSGSREV). In terms of domain architecture, Olfactomedin-like spans 230–489 (GCGELVWVGE…MVTYDLRLSE (260 aa)). A disulfide bridge links Cys-231 with Cys-419. 5 residues coordinate Ca(2+): Asp-366, Asn-414, Ala-415, Val-463, and Asp-464. A Microbody targeting signal motif is present at residues 488–490 (SEM).

Homodimer (via N-terminus). Can also form higher oligomers. Interacts with OLFM3, FN1, NRCAM, GLDN and NFASC. Interacts (via N-terminus) with MYL2. Interacts with SFRP1, FRZB, FZD7, FZD10, FZD1 and WIF1; regulates Wnt signaling. Interacts with SNTA1; regulates muscle hypertrophy. Interacts with ERBB2 and ERBB3; activates ERBB2-ERBB3 signaling pathway. Interacts with SNCG; affects its secretion and its aggregation. Palmitoylated. Post-translationally, undergoes a calcium-dependent proteolytic cleavage at Arg-212 by CAPN2 in the endoplasmic reticulum. The result is the production of two fragments, one of 35 kDa containing the C-terminal olfactomedin-like domain, and another of 20 kDa containing the N-terminal leucine zipper-like domain. In terms of processing, glycosylated. As to expression, expressed in optic nerve head, ciliary body and retina.

Its subcellular location is the secreted. It localises to the golgi apparatus. It is found in the cytoplasmic vesicle. The protein localises to the extracellular space. The protein resides in the extracellular matrix. Its subcellular location is the extracellular exosome. It localises to the mitochondrion. It is found in the mitochondrion intermembrane space. The protein localises to the mitochondrion inner membrane. The protein resides in the mitochondrion outer membrane. Its subcellular location is the rough endoplasmic reticulum. It localises to the cell projection. It is found in the cilium. The protein localises to the endoplasmic reticulum. In terms of biological role, secreted glycoprotein regulating the activation of different signaling pathways in adjacent cells to control different processes including cell adhesion, cell-matrix adhesion, cytoskeleton organization and cell migration. Promotes substrate adhesion, spreading and formation of focal contacts. Negatively regulates cell-matrix adhesion and stress fiber assembly through Rho protein signal transduction. Modulates the organization of actin cytoskeleton by stimulating the formation of stress fibers through interactions with components of Wnt signaling pathways. Promotes cell migration through activation of PTK2 and the downstream phosphatidylinositol 3-kinase signaling. Plays a role in bone formation and promotes osteoblast differentiation in a dose-dependent manner through mitogen-activated protein kinase signaling. Mediates myelination in the peripheral nervous system through ERBB2/ERBB3 signaling. Plays a role as a regulator of muscle hypertrophy through the components of dystrophin-associated protein complex. Involved in positive regulation of mitochondrial depolarization. Plays a role in neurite outgrowth. May participate in the obstruction of fluid outflow in the trabecular meshwork. The sequence is that of Myocilin (MYOC) from Felis catus (Cat).